The following is a 479-amino-acid chain: ATP-dependent RNA helicase DDX19B (479 aa).

Ala2 is modified (N-acetylalanine). The segment at 2 to 300 is N-terminal lobe; it reads ATDSWALAVD…DPNVIKLKRE (299 aa). Residues 34–54 are disordered; sequence TNGAVVKTNANAEKTDEEEKE. The segment at 55 to 68 is N-terminal helix; sequence DRAAQSLLNKLIRS. Positions 92–120 match the Q motif motif; that stretch reads KSFEELRLKPQLLQGVYAMGFNRPSKIQE. ATP-binding positions include Gln119 and 138 to 145; that span reads SQSGTGKT. The region spanning 125-295 is the Helicase ATP-binding domain; sequence LMLAEPPQNL…QKVVPDPNVI (171 aa). Residues 242–245 carry the DEAD box motif; it reads DEAD. The segment at 301–479 is C-terminal lobe; sequence EETLDTIKQY…DLDEIEKIAN (179 aa). Residues 306–474 enclose the Helicase C-terminal domain; that stretch reads TIKQYYVLCS…RLDTDDLDEI (169 aa). The ATP site is built by Arg429 and Arg432.

It belongs to the DEAD box helicase family. DDX19/DBP5 subfamily. As to quaternary structure, associates with the nuclear pore complex via interaction with NUP214. Interacts with NUP214 or RNA in a mutually exclusive manner.

It localises to the cytoplasm. The protein resides in the nucleus. Its subcellular location is the nucleoplasm. It catalyses the reaction ATP + H2O = ADP + phosphate + H(+). In terms of biological role, ATP-dependent RNA helicase involved in mRNA export from the nucleus. Rather than unwinding RNA duplexes, DDX19B functions as a remodeler of ribonucleoprotein particles, whereby proteins bound to nuclear mRNA are dissociated and replaced by cytoplasmic mRNA binding proteins. The polypeptide is ATP-dependent RNA helicase DDX19B (DDX19B) (Homo sapiens (Human)).